The chain runs to 921 residues: Alanine--tRNA ligase (921 aa).

Positions 602, 606, 706, and 710 each coordinate Zn(2+).

This sequence belongs to the class-II aminoacyl-tRNA synthetase family. Requires Zn(2+) as cofactor.

It is found in the cytoplasm. It catalyses the reaction tRNA(Ala) + L-alanine + ATP = L-alanyl-tRNA(Ala) + AMP + diphosphate. Functionally, catalyzes the attachment of alanine to tRNA(Ala) in a two-step reaction: alanine is first activated by ATP to form Ala-AMP and then transferred to the acceptor end of tRNA(Ala). Also edits incorrectly charged Ser-tRNA(Ala) and Gly-tRNA(Ala) via its editing domain. The sequence is that of Alanine--tRNA ligase from Hyperthermus butylicus (strain DSM 5456 / JCM 9403 / PLM1-5).